We begin with the raw amino-acid sequence, 1324 residues long: Mediator of RNA polymerase II transcription subunit 13 (1324 aa).

6 disordered regions span residues 296–346 (ESGV…PPEA), 386–455 (FFDD…ATTA), 535–590 (GRFF…EPEI), 607–631 (HDDK…SNNS), 694–816 (KGGQ…VPSA), and 1151–1198 (TGSD…PDIY). The segment covering 298–331 (GVNTNESTAAQPQPAQNGTNSMAPAAGTTNATTQ) has biased composition (polar residues). A compositionally biased stretch (acidic residues) spans 398–407 (DGDNDNGNDN). The segment covering 408-442 (DNDKADAMDVDVKEEAKKEEMIKKETKEEVPVKEE) has biased composition (basic and acidic residues). Low complexity predominate over residues 546–566 (DNEGSSDNTGDSSDSGDGSES). Composition is skewed to basic and acidic residues over residues 567–578 (VPRDVKRQKVDE) and 607–617 (HDDKPAKKIDS). Composition is skewed to low complexity over residues 618 to 631 (SNDT…SNNS) and 724 to 743 (SNAS…QMGA). The span at 750–784 (LSPSRGATPQPEGSSPETRPSNWTPGITSQVNSAA) shows a compositional bias: polar residues. Composition is skewed to low complexity over residues 785–816 (SSPV…VPSA) and 1172–1184 (TGAA…GSAP).

Belongs to the Mediator complex subunit 13 family. In terms of assembly, component of the SRB8-11 complex, which itself associates with the Mediator complex.

Its subcellular location is the nucleus. Its function is as follows. Component of the SRB8-11 complex. The SRB8-11 complex is a regulatory module of the Mediator complex which is itself involved in regulation of basal and activated RNA polymerase II-dependent transcription. The SRB8-11 complex may be involved in the transcriptional repression of a subset of genes regulated by Mediator. It may inhibit the association of the Mediator complex with RNA polymerase II to form the holoenzyme complex. In Yarrowia lipolytica (strain CLIB 122 / E 150) (Yeast), this protein is Mediator of RNA polymerase II transcription subunit 13 (SSN2).